The chain runs to 466 residues: Argininosuccinate lyase (466 aa).

The protein belongs to the lyase 1 family. Argininosuccinate lyase subfamily.

It localises to the cytoplasm. It carries out the reaction 2-(N(omega)-L-arginino)succinate = fumarate + L-arginine. Its pathway is amino-acid biosynthesis; L-arginine biosynthesis; L-arginine from L-ornithine and carbamoyl phosphate: step 3/3. This Brucella anthropi (strain ATCC 49188 / DSM 6882 / CCUG 24695 / JCM 21032 / LMG 3331 / NBRC 15819 / NCTC 12168 / Alc 37) (Ochrobactrum anthropi) protein is Argininosuccinate lyase.